Here is a 250-residue protein sequence, read N- to C-terminus: High affinity immunoglobulin epsilon receptor subunit alpha (250 aa).

Positions 1-23 are cleaved as a signal peptide; the sequence is MVTGRSAQLCLALLFMSLDVILT. At 24–204 the chain is on the extracellular side; that stretch reads ATEKSVLTLD…AYKCKYYWLQ (181 aa). An Ig-like 1 domain is found at 28-104; that stretch reads SVLTLDPPWI…QGLFKSKPVY (77 aa). A disulfide bridge links C49 with C92. Residues N58, N66, N73, N106, N152, and N167 are each glycosylated (N-linked (GlcNAc...) asparagine). The region spanning 114 to 181 is the Ig-like 2 domain; sequence LQTSADMVLV…YHCKGYLRQV (68 aa). C131 and C174 are oxidised to a cystine. The helical transmembrane segment at 205–223 threads the bilayer; the sequence is LIFPLLVAILFAVDTGLLL. Topologically, residues 224 to 250 are cytoplasmic; sequence STEEQFKSVLEIQKTGKYKKVETELLT.

Tetramer of an alpha chain, a beta chain, and two disulfide linked gamma chains. Interacts with IGHE (via CH3 region). As to expression, expressed in bone marrow mast cells, as well as in the pineal gland at night.

It is found in the cell membrane. Its function is as follows. High-affinity receptor for immunoglobulin epsilon/IgE. Mediates IgE effector functions in myeloid cells. Upon IgE binding and antigen/allergen cross-linking initiates signaling pathways that lead to myeloid cell activation and differentiation. On mast cells, basophils and eosinophils stimulates the secretion of vasoactive amines, lipid mediators and cytokines that contribute to inflammatory response, tissue remodeling and cytotoxicity against microbes. Triggers the immediate hypersensitivity response to allergens as a host defense mechanism against helminth parasites, pathogenic bacteria and venom toxicity. When dysregulated, it can elicit harmful life-threatening allergic and anaphylactic reactions. In Mus musculus (Mouse), this protein is High affinity immunoglobulin epsilon receptor subunit alpha (Fcer1a).